The primary structure comprises 75 residues: MNKKILLVIFIVTMLIVDEVNSFKFGSFIKRMWRSKLAKKLRAKGKELLRDYANRVLSPEEEAAAPAPVPAKRRR.

An N-terminal signal peptide occupies residues 1-22 (MNKKILLVIFIVTMLIVDEVNS).

It belongs to the non-disulfide-bridged peptide (NDBP) superfamily. Long chain multifunctional peptide (group 2) family. As to expression, expressed by the venom gland.

The protein resides in the secreted. Its function is as follows. Insecticidal toxin and antimicrobial peptide with potent activity against both Gram-negative and -positive bacteria, as well as against fungi. Acts by disrupting bacterial membrane integrity. Shows broad-spectrum and highly potent bactericidal activities against the Gram-positive bacteria B.cereus, B.megaterium, B.subtilis, M.luteus, S.aureus, S.epidermidis, S.warneri, S.griseus, S.scabiei, S.mutans, S.salivarius, and S.sanguinis. Also exhibits a wide spectrum of activity against the Gram-negative bacteria A.faecalis, E.coli, P.aeruginosa, P.solanacearum, S.enterica, S.marcescens, and S.maltophilia. Also shows antimicrobial activities against the fungal strains Aspergillus flavus, A.fumigatus, A.nidulans, A.niger, Beauveria bassiana, and Saccharomyces cerevisiae. Its antibiotic activity is potentiated by other antibacterial peptides such as MeuNaTxbeta-4. Also induces cytolysis on mice, lizards and birds erythrocytes. This chain is Meucin-49, found in Mesobuthus eupeus (Lesser Asian scorpion).